The primary structure comprises 211 residues: Protein-methionine-sulfoxide reductase heme-binding subunit MsrQ (211 aa).

The next 4 membrane-spanning stretches (helical) occupy residues 10-30, 82-102, 116-136, and 153-173; these read WLKV…VWAI, LWCF…ELGV, PYLT…FTST, and FVYL…KIIS.

It belongs to the MsrQ family. Heterodimer of a catalytic subunit (MsrP) and a heme-binding subunit (MsrQ). FMN is required as a cofactor. The cofactor is heme b.

Its subcellular location is the cell inner membrane. Its function is as follows. Part of the MsrPQ system that repairs oxidized periplasmic proteins containing methionine sulfoxide residues (Met-O), using respiratory chain electrons. Thus protects these proteins from oxidative-stress damage caused by reactive species of oxygen and chlorine generated by the host defense mechanisms. MsrPQ is essential for the maintenance of envelope integrity under bleach stress, rescuing a wide series of structurally unrelated periplasmic proteins from methionine oxidation, including the primary periplasmic chaperone SurA and the lipoprotein Pal. MsrQ provides electrons for reduction to the reductase catalytic subunit MsrP, using the quinone pool of the respiratory chain. The protein is Protein-methionine-sulfoxide reductase heme-binding subunit MsrQ of Shigella dysenteriae serotype 1 (strain Sd197).